The following is a 364-amino-acid chain: Flagellar P-ring protein (364 aa).

The first 21 residues, 1 to 21 (MNVFKVFCLMVLLGWQLPAMA), serve as a signal peptide directing secretion.

The protein belongs to the FlgI family. As to quaternary structure, the basal body constitutes a major portion of the flagellar organelle and consists of four rings (L,P,S, and M) mounted on a central rod.

The protein localises to the periplasm. Its subcellular location is the bacterial flagellum basal body. Functionally, assembles around the rod to form the L-ring and probably protects the motor/basal body from shearing forces during rotation. The protein is Flagellar P-ring protein of Pseudoalteromonas translucida (strain TAC 125).